The primary structure comprises 75 residues: Cytochrome c oxidase subunit 6C (75 aa).

Over 1 to 13 (MSSGALTKPQMRG) the chain is Mitochondrial matrix. A helical transmembrane segment spans residues 14–54 (LLAKRLRFHIVGAFAVSLGVAAFYKFAVAEPRKKAYADFYR). The Mitochondrial intermembrane segment spans residues 55–75 (NYDSMKDFEEMRKAGIFQSAK).

This sequence belongs to the cytochrome c oxidase subunit 6c family. In terms of assembly, component of the cytochrome c oxidase (complex IV, CIV), a multisubunit enzyme composed of 14 subunits. The complex is composed of a catalytic core of 3 subunits MT-CO1, MT-CO2 and MT-CO3, encoded in the mitochondrial DNA, and 11 supernumerary subunits COX4I, COX5A, COX5B, COX6A, COX6B, COX6C, COX7A, COX7B, COX7C, COX8 and NDUFA4, which are encoded in the nuclear genome. The complex exists as a monomer or a dimer and forms supercomplexes (SCs) in the inner mitochondrial membrane with NADH-ubiquinone oxidoreductase (complex I, CI) and ubiquinol-cytochrome c oxidoreductase (cytochrome b-c1 complex, complex III, CIII), resulting in different assemblies (supercomplex SCI(1)III(2)IV(1) and megacomplex MCI(2)III(2)IV(2)).

The protein localises to the mitochondrion inner membrane. It participates in energy metabolism; oxidative phosphorylation. Its function is as follows. Component of the cytochrome c oxidase, the last enzyme in the mitochondrial electron transport chain which drives oxidative phosphorylation. The respiratory chain contains 3 multisubunit complexes succinate dehydrogenase (complex II, CII), ubiquinol-cytochrome c oxidoreductase (cytochrome b-c1 complex, complex III, CIII) and cytochrome c oxidase (complex IV, CIV), that cooperate to transfer electrons derived from NADH and succinate to molecular oxygen, creating an electrochemical gradient over the inner membrane that drives transmembrane transport and the ATP synthase. Cytochrome c oxidase is the component of the respiratory chain that catalyzes the reduction of oxygen to water. Electrons originating from reduced cytochrome c in the intermembrane space (IMS) are transferred via the dinuclear copper A center (CU(A)) of subunit 2 and heme A of subunit 1 to the active site in subunit 1, a binuclear center (BNC) formed by heme A3 and copper B (CU(B)). The BNC reduces molecular oxygen to 2 water molecules using 4 electrons from cytochrome c in the IMS and 4 protons from the mitochondrial matrix. The protein is Cytochrome c oxidase subunit 6C (COX6C) of Carlito syrichta (Philippine tarsier).